Here is a 182-residue protein sequence, read N- to C-terminus: Gamma-crystallin N (182 aa).

Beta/gamma crystallin 'Greek key' domains are found at residues 6–46, 47–89, and 95–136; these read GKIT…HVES, GAWV…RPVG, and FRLE…KVYG. Positions 153 to 182 are disordered; it reads LSSSLQSDQGPEEATTKPATTQPPFLTANL. Residues 169-182 are compositionally biased toward polar residues; the sequence is KPATTQPPFLTANL.

This sequence belongs to the beta/gamma-crystallin family. In terms of assembly, monomer. As to expression, not specifically expressed in eye.

This Homo sapiens (Human) protein is Gamma-crystallin N.